Here is a 388-residue protein sequence, read N- to C-terminus: Mannitol-1-phosphate 5-dehydrogenase (388 aa).

Residue 5-16 (AIQFGGGNIGRG) coordinates NAD(+). K213 is a catalytic residue.

Belongs to the mannitol dehydrogenase family. In terms of assembly, monomer.

It catalyses the reaction D-mannitol 1-phosphate + NAD(+) = beta-D-fructose 6-phosphate + NADH + H(+). In terms of biological role, catalyzes the NAD(H)-dependent interconversion of D-fructose 6-phosphate and D-mannitol 1-phosphate in the mannitol metabolic pathway. In Aspergillus terreus (strain NIH 2624 / FGSC A1156), this protein is Mannitol-1-phosphate 5-dehydrogenase (mpdA).